The following is a 20-amino-acid chain: 26 kDa protein (20 aa).

This Bacillus cereus protein is 26 kDa protein.